The primary structure comprises 295 residues: Aquaporin-9 (295 aa).

The Cytoplasmic segment spans residues 1–24; the sequence is MPSEKDGAKKSLMQRLALKSRIAK. Residues 25-43 traverse the membrane as a helical segment; it reads ETLSEFLGTFIMIVLGCSS. Topologically, residues 44-57 are extracellular; sequence IAQAVLSRERFGGI. The chain crosses the membrane as a helical span at residues 58-77; that stretch reads ITINIGFASAVVMALYVTFG. Topologically, residues 78 to 79 are cytoplasmic; that stretch reads IS. Positions 80–92 form an intramembrane region, discontinuously helical; that stretch reads GGHINPAVSFAMC. An NPA 1 motif is present at residues 84-86; sequence NPA. Residues 93–98 lie on the Cytoplasmic side of the membrane; that stretch reads AFGRME. A helical membrane pass occupies residues 99–123; the sequence is WFKFPFYVGAQFLGAFVGAATVFGI. Over 124–160 the chain is Extracellular; sequence YYDGLMAFAGGKLLVVGENATAFIFATYPAPFISTPG. The chain crosses the membrane as a helical span at residues 161–178; that stretch reads AFVDQVVSTMFLLLIVFA. The Cytoplasmic segment spans residues 179–190; that stretch reads MFDSRNLGVPRG. Residues 191–207 form a helical membrane-spanning segment; the sequence is LEPVVIGLLIIVLSCSL. Residues 208–210 lie on the Extracellular side of the membrane; sequence GLN. Positions 211–225 form an intramembrane region, discontinuously helical; the sequence is SGCAMNPARDLSPRL. Residues 216 to 218 carry the NPA 2 motif; that stretch reads NPA. Residues 226–243 are Extracellular-facing; the sequence is FTALAGWGFEVFTVGNNF. The chain crosses the membrane as a helical span at residues 244 to 264; the sequence is WWIPVVGPMIGAFLGGLIYIL. Residues 265–295 are Cytoplasmic-facing; that stretch reads FIQMHHSKLDPDMKAEPSENNLEKHELSVIM.

The protein belongs to the MIP/aquaporin (TC 1.A.8) family. In terms of assembly, homotetramer; each monomer provides an independent glycerol/water pore. Detected in testis and liver. Detected in immature spermatocytes and in interstitial Leydig cells.

Its subcellular location is the cell membrane. It localises to the basolateral cell membrane. The catalysed reaction is H2O(in) = H2O(out). It carries out the reaction glycerol(in) = glycerol(out). The enzyme catalyses urea(in) = urea(out). It catalyses the reaction (S)-lactate(in) = (S)-lactate(out). The catalysed reaction is NH4(+)(in) = NH4(+)(out). It carries out the reaction uracil(in) = uracil(out). The enzyme catalyses adenine(out) = adenine(in). It catalyses the reaction 3-hydroxybutanoate(in) = 3-hydroxybutanoate(out). The catalysed reaction is D-sorbitol(in) = D-sorbitol(out). It carries out the reaction D-mannitol(in) = D-mannitol(out). The enzyme catalyses H2O2(out) = H2O2(in). It catalyses the reaction arsenite(in) = arsenite(out). The catalysed reaction is selenite(in) = selenite(out). With respect to regulation, channel activity is inhibited by mercury ions and phloretin. Its function is as follows. Aquaglyceroporins form homotetrameric transmembrane channels, with each monomer independently mediating glycerol and water transport across the plasma membrane along their osmotic gradient. AQP9 is the primary route for glycerol uptake in hepatocytes, supporting hepatic gluconeogenesis. It exhibits broad specificity and may transport various small, non-charged solutes, including carbamides, polyols, purines, and pyrimidines. AQP9 may also facilitate hepatic urea extrusion. Due to its permeability to lactate, AQP9 might participate in the astrocyte-to-neuron lactate shuttle, supplying neurons with energy. Additionally, AQP9 is permeable to arsenite, contributing to arsenic excretion by the liver and providing partial protection against arsenic toxicity. It is also permeable to H2O2 in vivo. Could also be permeable to ammonium. The chain is Aquaporin-9 from Rattus norvegicus (Rat).